The following is a 143-amino-acid chain: Small ribosomal subunit protein uS11c (143 aa).

Belongs to the universal ribosomal protein uS11 family. In terms of assembly, part of the 30S ribosomal subunit.

The protein localises to the plastid. Its subcellular location is the chloroplast. The sequence is that of Small ribosomal subunit protein uS11c from Hordeum vulgare (Barley).